A 392-amino-acid polypeptide reads, in one-letter code: uncharacterized protein (392 aa).

The N-terminal 34 residues, 1-34 (MCISSSSLLCGINSLKYASNRVGILIPPFQTASS), are a transit peptide targeting the mitochondrion. 8 helical membrane-spanning segments follow: residues 115–135 (VAIM…WHWD), 150–172 (FRFM…WWTL), 185–205 (LLVN…KFGV), 208–225 (ALSV…VALQ), 277–297 (ATFV…AVYA), 299–319 (AAIF…VYPV), 321–341 (AGIF…LNYE), and 350–370 (AHVS…PAMW). Ser292 serves as the catalytic Nucleophile. His351 is a catalytic residue.

This sequence belongs to the peptidase S54 family.

Its subcellular location is the mitochondrion inner membrane. This is an uncharacterized protein from Schizosaccharomyces pombe (strain 972 / ATCC 24843) (Fission yeast).